Consider the following 103-residue polypeptide: Enhancer of rudimentary homolog (103 aa).

This sequence belongs to the E(R) family. Homodimer.

In terms of biological role, may have a role in the cell cycle. This Caenorhabditis elegans protein is Enhancer of rudimentary homolog.